Consider the following 108-residue polypeptide: Movement protein TGB2 (108 aa).

The Cytoplasmic segment spans residues 1–8 (MPLTPPPD). A helical membrane pass occupies residues 9 to 29 (YTKPFIAVVVGGTLAAFVLLL). Over 30–71 (TRNTLPHTGDNLHSLPHGGTYCDGTKRIRYGGPHRSHVPELP) the chain is Lumenal. The chain crosses the membrane as a helical span at residues 72–92 (AKSWALITVVAILIALHFSCL). Residues 93 to 108 (RTHRVHRCVLCHTTSG) lie on the Cytoplasmic side of the membrane.

It belongs to the Tymovirales TGBp2 protein family.

It is found in the host endoplasmic reticulum membrane. Plays a role in viral cell-to-cell propagation, by facilitating genome transport to neighboring plant cells through plasmosdesmata,. The sequence is that of Movement protein TGB2 from Lily virus X.